Here is a 107-residue protein sequence, read N- to C-terminus: Phosphoribosyl-ATP pyrophosphatase (107 aa).

The protein belongs to the PRA-PH family.

The protein resides in the cytoplasm. The catalysed reaction is 1-(5-phospho-beta-D-ribosyl)-ATP + H2O = 1-(5-phospho-beta-D-ribosyl)-5'-AMP + diphosphate + H(+). It participates in amino-acid biosynthesis; L-histidine biosynthesis; L-histidine from 5-phospho-alpha-D-ribose 1-diphosphate: step 2/9. The protein is Phosphoribosyl-ATP pyrophosphatase of Bacillus mycoides (strain KBAB4) (Bacillus weihenstephanensis).